The chain runs to 302 residues: MINPLKKKPRTHFLQKAPEKPDWLKVKLTFPDPKNNPVAIVRNSLEKKKLNTVCESASCPNLNHCWSRKTATYMLGGDICTRRCSYCDVASGKPSALDRDEPKRVAESAIALGLKHVVITAVNRDDLEDGGAAHFAETVEVVREGLPDCKIELLVPDFKVRPESLEIIFQCKPDIFNHNVETIKRLFPEVAPQKKYERSLDVLKIASEKGFLTKSGLILGMGETVEEVKECMRDLIGVGVSLLTLGQYLQPTPTHLPVKSYVLPEVFQELRIYGKSIGFKGVFSGPLVRSSYHADEQVSWNP.

[4Fe-4S] cluster contacts are provided by cysteine 54, cysteine 59, cysteine 65, cysteine 80, cysteine 84, cysteine 87, and serine 291. Residues 66 to 280 (WSRKTATYML…RIYGKSIGFK (215 aa)) form the Radical SAM core domain.

Belongs to the radical SAM superfamily. Lipoyl synthase family. [4Fe-4S] cluster is required as a cofactor.

The protein localises to the cytoplasm. It carries out the reaction [[Fe-S] cluster scaffold protein carrying a second [4Fe-4S](2+) cluster] + N(6)-octanoyl-L-lysyl-[protein] + 2 oxidized [2Fe-2S]-[ferredoxin] + 2 S-adenosyl-L-methionine + 4 H(+) = [[Fe-S] cluster scaffold protein] + N(6)-[(R)-dihydrolipoyl]-L-lysyl-[protein] + 4 Fe(3+) + 2 hydrogen sulfide + 2 5'-deoxyadenosine + 2 L-methionine + 2 reduced [2Fe-2S]-[ferredoxin]. The protein operates within protein modification; protein lipoylation via endogenous pathway; protein N(6)-(lipoyl)lysine from octanoyl-[acyl-carrier-protein]: step 2/2. Its function is as follows. Catalyzes the radical-mediated insertion of two sulfur atoms into the C-6 and C-8 positions of the octanoyl moiety bound to the lipoyl domains of lipoate-dependent enzymes, thereby converting the octanoylated domains into lipoylated derivatives. This Leptospira borgpetersenii serovar Hardjo-bovis (strain JB197) protein is Lipoyl synthase.